Consider the following 287-residue polypeptide: Probable WRKY transcription factor 57 (287 aa).

Residues 86 to 99 (TSTNNNPSATSSSS) are compositionally biased toward low complexity. The tract at residues 86 to 137 (TSTNNNPSATSSSSEDPAENSTASAEKTPPPETPVKEKKKAQKRIRQPRFAF) is disordered. Residues 122-132 (EKKKAQKRIRQ) show a composition bias toward basic residues. Residues 141-206 (SDVDNLEDGY…YEGQHCHQTI (66 aa)) constitute a DNA-binding region (WRKY). A disordered region spans residues 248 to 287 (DNNAPSPRLPRPTTEDTPAVSTPSEEGLLGDIVPQTMRNP). Over residues 262–271 (EDTPAVSTPS) the composition is skewed to polar residues.

This sequence belongs to the WRKY group II-c family.

It is found in the nucleus. Its function is as follows. Transcription factor. Interacts specifically with the W box (5'-(T)TGAC[CT]-3'), a frequently occurring elicitor-responsive cis-acting element. The polypeptide is Probable WRKY transcription factor 57 (WRKY57) (Arabidopsis thaliana (Mouse-ear cress)).